A 131-amino-acid polypeptide reads, in one-letter code: D-ribose pyranase (131 aa).

The Proton donor role is filled by His20. Substrate contacts are provided by residues Asp28, His98, and 120–122 (YAN).

It belongs to the RbsD / FucU family. RbsD subfamily. In terms of assembly, homodecamer.

The protein resides in the cytoplasm. It carries out the reaction beta-D-ribopyranose = beta-D-ribofuranose. Its pathway is carbohydrate metabolism; D-ribose degradation; D-ribose 5-phosphate from beta-D-ribopyranose: step 1/2. Catalyzes the interconversion of beta-pyran and beta-furan forms of D-ribose. In Clostridium perfringens (strain ATCC 13124 / DSM 756 / JCM 1290 / NCIMB 6125 / NCTC 8237 / Type A), this protein is D-ribose pyranase.